The primary structure comprises 282 residues: N-methyltransferase gliN (282 aa).

Belongs to the methyltransferase superfamily. LaeA methyltransferase family.

It participates in mycotoxin biosynthesis. In terms of biological role, N-methyltransferase; part of the gene cluster that mediates the biosynthesis of gliotoxin, a member of the epipolythiodioxopiperazine (ETP) class of toxins characterized by a disulfide bridged cyclic dipeptide. The first step in gliotoxin biosynthesis is the condensation of serine and phenylalanine to form the cyclo-L-phenylalanyl-L-serine diketopiperazine (DKP) by the NRPS gliP. GliP is also able to produce the DKP cyclo-L-tryptophanyl-L-serine, suggesting that the substrate specificity of the first adenylation (A) domain in gliP is sufficiently relaxed to accommodate both L-Phe and L-Trp. The cytochrome P450 monooxygenase gliC has been shown to catalyze the subsequent hydroxylation of the alpha-carbon of L-Phe in cyclo-L-phenylalanyl-L-serine whereas the second cytochrome P450 enzyme, gliF, is presumably involved in the modification of the DKP side chain. The glutathione S-transferase (GST) gliG then forms a bis-glutathionylated biosynthetic intermediate which is responsible for the sulfurization of gliotoxin. This bis-glutathionylated intermediate is subsequently processed by the gamma-glutamyl cyclotransferase gliK to remove both gamma-glutamyl moieties. Subsequent processing via gliI yields a biosynthetic intermediate, which is N-methylated via the N-methyltransferase gliN, before the gliotoxin oxidoreductase gliT-mediated disulfide bridge closure. GliN-mediated amide methylation confers stability to ETP, damping the spontaneous formation of tri- and tetrasulfides. Intracellular dithiol gliotoxin oxidized by gliT is subsequently effluxed by gliA. Gliotoxin contributes to pathogenesis during invasive aspergillosis. In macrophages and neutrophils, gliotoxin showed inhibition of various different cell functions including cytokine production, antigen presentation, phagocytosis, and production of reactive oxygen species. This is N-methyltransferase gliN from Aspergillus fumigatus (strain ATCC MYA-4609 / CBS 101355 / FGSC A1100 / Af293) (Neosartorya fumigata).